We begin with the raw amino-acid sequence, 405 residues long: L-rhamnonate dehydratase (405 aa).

The substrate site is built by histidine 33 and arginine 59. Residues aspartate 226, glutamate 252, and glutamate 280 each contribute to the Mg(2+) site. Histidine 329 (proton acceptor) is an active-site residue. Position 349 (glutamate 349) interacts with substrate.

This sequence belongs to the mandelate racemase/muconate lactonizing enzyme family. RhamD subfamily. As to quaternary structure, homooctamer; tetramer of dimers. The cofactor is Mg(2+).

The catalysed reaction is L-rhamnonate = 2-dehydro-3-deoxy-L-rhamnonate + H2O. Functionally, catalyzes the dehydration of L-rhamnonate to 2-keto-3-deoxy-L-rhamnonate (KDR). This is L-rhamnonate dehydratase from Escherichia coli O127:H6 (strain E2348/69 / EPEC).